Reading from the N-terminus, the 662-residue chain is p-hydroxybenzoic acid efflux pump subunit AaeB (662 aa).

11 helical membrane-spanning segments follow: residues 22 to 42, 52 to 72, 76 to 96, 102 to 122, 129 to 149, 161 to 181, 378 to 398, 415 to 435, 439 to 459, 467 to 487, and 491 to 511; these read FAFK…HLQL, AAIV…SGAI, GMLR…IIIA, VVML…SSLV, VFGL…GTPL, EIVL…PRSI, LFWL…IAVV, FLFG…FIMP, QSML…GLEV, LGAL…TFHI, and LDSA…ILLI.

This sequence belongs to the aromatic acid exporter ArAE (TC 2.A.85) family.

The protein resides in the cell inner membrane. Its function is as follows. Forms an efflux pump with AaeA. Could function as a metabolic relief valve, allowing to eliminate certain compounds when they accumulate to high levels in the cell. In Pectobacterium carotovorum subsp. carotovorum (strain PC1), this protein is p-hydroxybenzoic acid efflux pump subunit AaeB.